Consider the following 117-residue polypeptide: Photosystem II reaction center Psb28 protein (117 aa).

Belongs to the Psb28 family. As to quaternary structure, part of the photosystem II complex.

It is found in the cellular thylakoid membrane. This is Photosystem II reaction center Psb28 protein from Prochlorococcus marinus subsp. pastoris (strain CCMP1986 / NIES-2087 / MED4).